We begin with the raw amino-acid sequence, 124 residues long: Small ribosomal subunit protein uS12 (124 aa).

Positions 1 to 26 are disordered; sequence MPTISQLVGSERKRLTKKTKSPALKA. D89 carries the post-translational modification 3-methylthioaspartic acid. Positions 104-124 are disordered; that stretch reads TAGVKDRRQSRSKYGAKAPKD.

It belongs to the universal ribosomal protein uS12 family. As to quaternary structure, part of the 30S ribosomal subunit. Contacts proteins S8 and S17. May interact with IF1 in the 30S initiation complex.

With S4 and S5 plays an important role in translational accuracy. Functionally, interacts with and stabilizes bases of the 16S rRNA that are involved in tRNA selection in the A site and with the mRNA backbone. Located at the interface of the 30S and 50S subunits, it traverses the body of the 30S subunit contacting proteins on the other side and probably holding the rRNA structure together. The combined cluster of proteins S8, S12 and S17 appears to hold together the shoulder and platform of the 30S subunit. The chain is Small ribosomal subunit protein uS12 from Prochlorococcus marinus (strain MIT 9215).